Here is a 143-residue protein sequence, read N- to C-terminus: ATP synthase subunit b' (143 aa).

Residues 6–26 (ATLPLMALQFLVLAVVLNAVF) traverse the membrane as a helical segment.

Belongs to the ATPase B chain family. F-type ATPases have 2 components, F(1) - the catalytic core - and F(0) - the membrane proton channel. F(1) has five subunits: alpha(3), beta(3), gamma(1), delta(1), epsilon(1). F(0) has four main subunits: a(1), b(1), b'(1) and c(10-14). The alpha and beta chains form an alternating ring which encloses part of the gamma chain. F(1) is attached to F(0) by a central stalk formed by the gamma and epsilon chains, while a peripheral stalk is formed by the delta, b and b' chains.

The protein resides in the cellular thylakoid membrane. In terms of biological role, f(1)F(0) ATP synthase produces ATP from ADP in the presence of a proton or sodium gradient. F-type ATPases consist of two structural domains, F(1) containing the extramembraneous catalytic core and F(0) containing the membrane proton channel, linked together by a central stalk and a peripheral stalk. During catalysis, ATP synthesis in the catalytic domain of F(1) is coupled via a rotary mechanism of the central stalk subunits to proton translocation. Functionally, component of the F(0) channel, it forms part of the peripheral stalk, linking F(1) to F(0). The b'-subunit is a diverged and duplicated form of b found in plants and photosynthetic bacteria. This Gloeothece citriformis (strain PCC 7424) (Cyanothece sp. (strain PCC 7424)) protein is ATP synthase subunit b'.